A 414-amino-acid polypeptide reads, in one-letter code: Tyrosine--tRNA ligase (414 aa).

Tyr-38 lines the L-tyrosine pocket. A 'HIGH' region motif is present at residues 43–52 (PTATSLHLGN). Residues Tyr-165 and Gln-169 each coordinate L-tyrosine. Positions 228-232 (KFGKS) match the 'KMSKS' region motif. Residue Lys-231 coordinates ATP. One can recognise an S4 RNA-binding domain in the interval 349–414 (FNANQIIDLG…KKYFFIIELI (66 aa)).

This sequence belongs to the class-I aminoacyl-tRNA synthetase family. TyrS type 1 subfamily. Homodimer.

It localises to the cytoplasm. The catalysed reaction is tRNA(Tyr) + L-tyrosine + ATP = L-tyrosyl-tRNA(Tyr) + AMP + diphosphate + H(+). Catalyzes the attachment of tyrosine to tRNA(Tyr) in a two-step reaction: tyrosine is first activated by ATP to form Tyr-AMP and then transferred to the acceptor end of tRNA(Tyr). The sequence is that of Tyrosine--tRNA ligase from Mesomycoplasma hyopneumoniae (strain 232) (Mycoplasma hyopneumoniae).